The chain runs to 217 residues: 3,4-dihydroxy-2-butanone 4-phosphate synthase (217 aa).

D-ribulose 5-phosphate contacts are provided by residues 37–38 (RE), Asp-42, 150–154 (RRGHT), and Glu-174. Residue Glu-38 participates in Mg(2+) binding. His-153 provides a ligand contact to Mg(2+).

Belongs to the DHBP synthase family. As to quaternary structure, homodimer. Mg(2+) is required as a cofactor. It depends on Mn(2+) as a cofactor.

It carries out the reaction D-ribulose 5-phosphate = (2S)-2-hydroxy-3-oxobutyl phosphate + formate + H(+). The protein operates within cofactor biosynthesis; riboflavin biosynthesis; 2-hydroxy-3-oxobutyl phosphate from D-ribulose 5-phosphate: step 1/1. Catalyzes the conversion of D-ribulose 5-phosphate to formate and 3,4-dihydroxy-2-butanone 4-phosphate. This chain is 3,4-dihydroxy-2-butanone 4-phosphate synthase, found in Shewanella loihica (strain ATCC BAA-1088 / PV-4).